A 122-amino-acid chain; its full sequence is Prefoldin subunit 1 (122 aa).

Residue A2 is modified to N-acetylalanine.

Belongs to the prefoldin subunit beta family. In terms of assembly, heterohexamer of two PFD-alpha type and four PFD-beta type subunits.

Functionally, binds specifically to cytosolic chaperonin (c-CPN) and transfers target proteins to it. Binds to nascent polypeptide chain and promotes folding in an environment in which there are many competing pathways for nonnative proteins. This Pongo abelii (Sumatran orangutan) protein is Prefoldin subunit 1 (PFDN1).